Reading from the N-terminus, the 446-residue chain is Exopolygalacturonase (446 aa).

The N-terminal stretch at 1 to 17 (MRVTDIISCALLQASIA) is a signal peptide. N-linked (GlcNAc...) asparagine glycans are attached at residues N53, N118, N134, and N204. One copy of the PbH1 1 repeat lies at 236–257 (SDNIIIQNSNINNGDDCVSFKP). The Proton donor role is filled by D250. A disulfide bridge links C252 with C269. Residues N258 and N270 are each glycosylated (N-linked (GlcNAc...) asparagine). PbH1 repeat units lie at residues 259–279 (STNI…SVGS), 290–311 (VENI…RIKV), and 332–353 (VRNV…EITQ). H273 is an active-site residue. N297, N302, N334, N359, and N369 each carry an N-linked (GlcNAc...) asparagine glycan. 2 PbH1 repeats span residues 367 to 398 (PSNL…VVCS) and 403 to 434 (CSDI…QSQV). Disulfide bonds link C397/C403 and C424/C436. Residue N435 is glycosylated (N-linked (GlcNAc...) asparagine).

The protein belongs to the glycosyl hydrolase 28 family.

The protein resides in the secreted. It carries out the reaction [(1-&gt;4)-alpha-D-galacturonosyl](n) + H2O = alpha-D-galacturonate + [(1-&gt;4)-alpha-D-galacturonosyl](n-1). In terms of biological role, hydrolysis of 1,4-alpha-D-galactosiduronic linkages in pectate and other galacturonans. In Cochliobolus carbonum (Maize leaf spot fungus), this protein is Exopolygalacturonase (PGX1).